Reading from the N-terminus, the 274-residue chain is Small ribosomal subunit biogenesis GTPase RsgA (274 aa).

Residues 58–215 (KNYLNRPKVA…LVDSPGFSIY (158 aa)) form the CP-type G domain. Residues 108–111 (SKLD) and 158–166 (GHSGVGKST) each bind GTP. Residues cysteine 238, cysteine 243, histidine 245, and cysteine 252 each coordinate Zn(2+).

Belongs to the TRAFAC class YlqF/YawG GTPase family. RsgA subfamily. Monomer. Associates with 30S ribosomal subunit, binds 16S rRNA. Zn(2+) is required as a cofactor.

The protein localises to the cytoplasm. In terms of biological role, one of several proteins that assist in the late maturation steps of the functional core of the 30S ribosomal subunit. Helps release RbfA from mature subunits. May play a role in the assembly of ribosomal proteins into the subunit. Circularly permuted GTPase that catalyzes slow GTP hydrolysis, GTPase activity is stimulated by the 30S ribosomal subunit. The protein is Small ribosomal subunit biogenesis GTPase RsgA of Mycoplasmoides gallisepticum (strain R(low / passage 15 / clone 2)) (Mycoplasma gallisepticum).